Reading from the N-terminus, the 131-residue chain is Glycine cleavage system H protein (131 aa).

Residues 24–106 enclose the Lipoyl-binding domain; it reads RVTVGISDHA…YGEGWIFVVE (83 aa). Lysine 65 bears the N6-lipoyllysine mark.

The protein belongs to the GcvH family. In terms of assembly, the glycine cleavage system is composed of four proteins: P, T, L and H. (R)-lipoate serves as cofactor.

Its function is as follows. The glycine cleavage system catalyzes the degradation of glycine. The H protein shuttles the methylamine group of glycine from the P protein to the T protein. The protein is Glycine cleavage system H protein of Xanthomonas oryzae pv. oryzae (strain MAFF 311018).